Here is a 248-residue protein sequence, read N- to C-terminus: 1-(5-phosphoribosyl)-5-[(5-phosphoribosylamino)methylideneamino] imidazole-4-carboxamide isomerase (248 aa).

Residue D8 is the Proton acceptor of the active site. D131 (proton donor) is an active-site residue.

The protein belongs to the HisA/HisF family.

It is found in the cytoplasm. The enzyme catalyses 1-(5-phospho-beta-D-ribosyl)-5-[(5-phospho-beta-D-ribosylamino)methylideneamino]imidazole-4-carboxamide = 5-[(5-phospho-1-deoxy-D-ribulos-1-ylimino)methylamino]-1-(5-phospho-beta-D-ribosyl)imidazole-4-carboxamide. Its pathway is amino-acid biosynthesis; L-histidine biosynthesis; L-histidine from 5-phospho-alpha-D-ribose 1-diphosphate: step 4/9. This chain is 1-(5-phosphoribosyl)-5-[(5-phosphoribosylamino)methylideneamino] imidazole-4-carboxamide isomerase, found in Nitrosomonas eutropha (strain DSM 101675 / C91 / Nm57).